We begin with the raw amino-acid sequence, 156 residues long: Small ribosomal subunit protein uS7 (156 aa).

Belongs to the universal ribosomal protein uS7 family. Part of the 30S ribosomal subunit. Contacts proteins S9 and S11.

In terms of biological role, one of the primary rRNA binding proteins, it binds directly to 16S rRNA where it nucleates assembly of the head domain of the 30S subunit. Is located at the subunit interface close to the decoding center, probably blocks exit of the E-site tRNA. This chain is Small ribosomal subunit protein uS7, found in Azoarcus sp. (strain BH72).